A 167-amino-acid polypeptide reads, in one-letter code: Dual specificity protein phosphatase 1B (167 aa).

Residues 24–165 (DLSEIQQGLF…LQQFEKSIQG (142 aa)) form the Tyrosine-protein phosphatase domain. The active-site Phosphocysteine intermediate is cysteine 109.

Belongs to the protein-tyrosine phosphatase family. Non-receptor class dual specificity subfamily. In terms of assembly, associates with MPK3 and MPK6. Interacts with MPK6 is promoted during HR-like responses triggered by fungal elicitors, whereas interaction with MPK3 in repressed. Expressed in flowers, seedlings, roots, leaves, and seeds. Present in stomata and meristematic cells.

It localises to the nucleus. The protein localises to the cytoplasm. It catalyses the reaction O-phospho-L-tyrosyl-[protein] + H2O = L-tyrosyl-[protein] + phosphate. The enzyme catalyses O-phospho-L-seryl-[protein] + H2O = L-seryl-[protein] + phosphate. It carries out the reaction O-phospho-L-threonyl-[protein] + H2O = L-threonyl-[protein] + phosphate. Its function is as follows. Has a dual specificity toward Ser/Thr and Tyr-containing proteins. Prevents biotic and abiotic stress responses, including ozone, oxidative stress and pathogen attacks; represses MAPK activities during hypersensitive response to limit the spread of the HR response after infection by necrotrophic pathogen such as Botrytis cinerea. May be also involved in ABA and salt responses. Dephosphorylates MPK3 and MPK6. In Arabidopsis thaliana (Mouse-ear cress), this protein is Dual specificity protein phosphatase 1B (DSPTP1B).